The primary structure comprises 37 residues: Large ribosomal subunit protein bL36 (37 aa).

This sequence belongs to the bacterial ribosomal protein bL36 family.

This is Large ribosomal subunit protein bL36 from Leptospira interrogans serogroup Icterohaemorrhagiae serovar copenhageni (strain Fiocruz L1-130).